The sequence spans 1732 residues: Lys-gingipain W83 (1732 aa).

Residues 1–24 form the signal peptide; that stretch reads MRKLLLLIAASLLGVGLYAQSAKI. Residues 25 to 228 constitute a propeptide that is removed on maturation; that stretch reads KLDAPTTRTT…ETAYKQLFNR (204 aa). Ca(2+) is bound by residues Asp-313, Asp-337, Asp-339, Phe-341, and Glu-343. Catalysis depends on His-444, which acts as the Proton donor. The active-site Nucleophile is Cys-477. Positions 482 and 491 each coordinate Ca(2+). Residues 965-988 form a disordered region; it reads DAPNGTPNPNPNPNPNPGTTLSES. Residues 970 to 980 show a composition bias toward pro residues; sequence TPNPNPNPNPN. The Ca(2+) site is built by Ser-988, Glu-990, Asp-1001, Asp-1003, Asp-1005, His-1007, Ser-1022, Gly-1024, Asn-1043, Asp-1146, Glu-1147, Asp-1433, Glu-1435, Asp-1446, Asp-1448, Asp-1450, Asn-1452, Ser-1470, Ile-1472, Asn-1490, and Asp-1595.

Belongs to the peptidase C25 family. Post-translationally, proteolytically cleaved into a catalytic subunit and three adhesins. Arg-gingipain is involved in this post-translational processing.

Its subcellular location is the secreted. It catalyses the reaction Endopeptidase with strict specificity for lysyl bonds.. In terms of biological role, cysteine proteinase with a strong preference for substrates with Lys in the P1 position. Hydrolyzes bovine hemoglobin, bovine serum albumin, casein, human placental type I collagen and human IgA and IgG. Disrupts the functions of polymorphonuclear leukocytes. May act as a virulence factor in the development of peridontal disease. Involved in the coaggregation of P.gingivalis with other oral bacteria. Has hemolytic activity; this is mediated by the adhesin domains and does not require the catalytic domain. The sequence is that of Lys-gingipain W83 from Porphyromonas gingivalis (Bacteroides gingivalis).